We begin with the raw amino-acid sequence, 388 residues long: F-box protein ETP2 (388 aa).

Residues 2 to 48 (KTIQEQLPNDLVEEILCRVPATSLRRLRSTCKAWNRLFKGDRILASK) form the F-box domain.

In terms of assembly, interacts with EIN2 (via C-terminus).

In terms of biological role, negative regulator of EIN2 protein stability. The protein is F-box protein ETP2 of Arabidopsis thaliana (Mouse-ear cress).